The sequence spans 568 residues: uncharacterized protein (568 aa).

The span at 334 to 346 (DDNEEKNNDRPKI) shows a compositional bias: basic and acidic residues. 2 disordered regions span residues 334 to 382 (DDNE…NDQN) and 436 to 479 (QVEE…SCKN). A compositionally biased stretch (low complexity) spans 458–477 (KIASSASKNDNSNNKNSKSC).

It to yeast YJL043w.

This is an uncharacterized protein from Saccharomyces cerevisiae (strain ATCC 204508 / S288c) (Baker's yeast).